A 130-amino-acid polypeptide reads, in one-letter code: Zinc finger A20 and AN1 domain-containing stress-associated protein 10 (130 aa).

Residues 4-38 form an A20-type zinc finger; it reads ETEALPCEGGCGLYGTRVNNNLCSLCYKKSVLQHS. Residues Cys10, Cys14, Cys26, Cys29, Cys71, Cys74, Cys85, Cys87, Cys92, His95, His101, and Cys103 each contribute to the Zn(2+) site. An AN1-type zinc finger spans residues 65–111; that stretch reads PVKKRRCGICKRKVGMLGFKCRCGHMFCGSHRYPEEHSCPFDYKQSG.

Functionally, may be involved in environmental stress response. This chain is Zinc finger A20 and AN1 domain-containing stress-associated protein 10 (SAP10), found in Arabidopsis thaliana (Mouse-ear cress).